The chain runs to 221 residues: Interleukin-12 subunit alpha (221 aa).

The signal sequence occupies residues 1–25 (MCPLRSLLLLSTLVLLHHLPHLSLG). 3 cysteine pairs are disulfide-bonded: Cys39–Cys112, Cys66–Cys198, and Cys87–Cys125. 2 N-linked (GlcNAc...) asparagine glycosylation sites follow: Asn41 and Asn95.

It belongs to the IL-6 superfamily. In terms of assembly, heterodimer with IL12B; disulfide-linked. This heterodimer is known as interleukin IL-12. Heterodimer with EBI3/IL27B; not disulfide-linked. This heterodimer is known as interleukin IL-35. Interacts with NBR1; this interaction promotes IL-12 secretion.

The protein resides in the secreted. Heterodimerizes with IL12B to form the IL-12 cytokine or with EBI3/IL27B to form the IL-35 cytokine. IL-12 is primarily produced by professional antigen-presenting cells (APCs) such as B-cells and dendritic cells (DCs) as well as macrophages and granulocytes and regulates T-cell and natural killer-cell responses, induces the production of interferon-gamma (IFN-gamma), favors the differentiation of T-helper 1 (Th1) cells and is an important link between innate resistance and adaptive immunity. Mechanistically, exerts its biological effects through a receptor composed of IL12R1 and IL12R2 subunits. Binding to the receptor results in the rapid tyrosine phosphorylation of a number of cellular substrates including the JAK family kinases TYK2 and JAK2. In turn, recruited STAT4 gets phosphorylated and translocates to the nucleus where it regulates cytokine/growth factor responsive genes. As part of IL-35, plays essential roles in maintaining the immune homeostasis of the liver microenvironment and also functions as an immune-suppressive cytokine. Mediates biological events through unconventional receptors composed of IL12RB2 and gp130/IL6ST heterodimers or homodimers. Signaling requires the transcription factors STAT1 and STAT4, which form a unique heterodimer that binds to distinct DNA sites. This is Interleukin-12 subunit alpha (IL12A) from Cervus elaphus (Red deer).